Here is a 212-residue protein sequence, read N- to C-terminus: ER lumen protein-retaining receptor 1 (212 aa).

Residues 1-4 lie on the Lumenal side of the membrane; that stretch reads MNLF. A helical transmembrane segment spans residues 5–24; sequence RFLGDLSHLLAIILLLLKIW. The Cytoplasmic segment spans residues 25 to 32; the sequence is KSRSCAGI. The chain crosses the membrane as a helical span at residues 33–52; the sequence is SGKSQVLFAVVFTARYLDLF. The interval 47 to 48 is interaction with the K-D-E-L motif on target proteins; sequence RY. Over 53-58 the chain is Lumenal; that stretch reads TNYISL. The chain crosses the membrane as a helical span at residues 59 to 79; it reads YNTCMKVVYIACSFTTVWMIY. Residues 80 to 92 are Cytoplasmic-facing; sequence SKFKATYDGNHDT. Residues 93–110 form a helical membrane-spanning segment; sequence FRVEFLVIPTAILAFLVN. The Lumenal portion of the chain corresponds to 111–116; sequence HDFTPL. Residues 117 to 135 traverse the membrane as a helical segment; that stretch reads EILWTFSIYLESVAILPQL. The Cytoplasmic portion of the chain corresponds to 136 to 149; it reads FMVSKTGEAETITS. A helical membrane pass occupies residues 150-168; it reads HYLFALGVYRTLYLFNWIW. An interaction with the K-D-E-L motif on target proteins region spans residues 159–169; the sequence is RTLYLFNWIWR. At 169–178 the chain is on the lumenal side; the sequence is RYHFEGFFDL. A helical membrane pass occupies residues 179–199; that stretch reads IAIVAGLVQTVLYCDFFYLYI. The Cytoplasmic segment spans residues 200-212; the sequence is TKVLKGKKLSLPA. Positions 204 to 207 are important for recycling of cargo proteins with the sequence motif K-D-E-L from the Golgi to the endoplasmic reticulum; that stretch reads KGKK. Serine 209 carries the phosphoserine; by PKA modification.

It belongs to the ERD2 family. As to quaternary structure, upon ligand binding the receptor oligomerizes and interacts with components of the transport machinery such as ARFGAP1 and ARF1. Post-translationally, phosphorylation by PKA at Ser-209 is required for endoplasmic reticulum retention function.

The protein resides in the golgi apparatus membrane. Its subcellular location is the cytoplasmic vesicle. It is found in the COPI-coated vesicle membrane. It localises to the endoplasmic reticulum membrane. The protein localises to the endoplasmic reticulum-Golgi intermediate compartment membrane. Its function is as follows. Receptor for the C-terminal sequence motif K-D-E-L that is present on endoplasmic reticulum resident proteins and that mediates their recycling from the Golgi back to the endoplasmic reticulum. This is ER lumen protein-retaining receptor 1 (KDELR1) from Bos taurus (Bovine).